The following is a 155-amino-acid chain: RNA pyrophosphohydrolase (155 aa).

The Nudix hydrolase domain maps to 5 to 149; it reads EYRSGVGIML…KKPLYEKILS (145 aa). Residues 39–60 carry the Nudix box motif; it reads GGLEAKETPEVGVLRELEEETG.

The protein belongs to the Nudix hydrolase family. RppH subfamily. Requires a divalent metal cation as cofactor.

Its function is as follows. Accelerates the degradation of transcripts by removing pyrophosphate from the 5'-end of triphosphorylated RNA, leading to a more labile monophosphorylated state that can stimulate subsequent ribonuclease cleavage. In Zymomonas mobilis subsp. mobilis (strain ATCC 31821 / ZM4 / CP4), this protein is RNA pyrophosphohydrolase.